The primary structure comprises 361 residues: 3-dehydroquinate synthase (361 aa).

NAD(+) contacts are provided by residues 60 to 65, 94 to 98, 118 to 119, lysine 131, and lysine 140; these read DAEAAK, GATTD, and TT. Zn(2+)-binding residues include glutamate 173, histidine 242, and histidine 258.

The protein belongs to the sugar phosphate cyclases superfamily. Dehydroquinate synthase family. It depends on Co(2+) as a cofactor. Requires Zn(2+) as cofactor. The cofactor is NAD(+).

It is found in the cytoplasm. It carries out the reaction 7-phospho-2-dehydro-3-deoxy-D-arabino-heptonate = 3-dehydroquinate + phosphate. It participates in metabolic intermediate biosynthesis; chorismate biosynthesis; chorismate from D-erythrose 4-phosphate and phosphoenolpyruvate: step 2/7. In terms of biological role, catalyzes the conversion of 3-deoxy-D-arabino-heptulosonate 7-phosphate (DAHP) to dehydroquinate (DHQ). The chain is 3-dehydroquinate synthase from Cutibacterium acnes (strain DSM 16379 / KPA171202) (Propionibacterium acnes).